The chain runs to 322 residues: Ribosomal RNA small subunit methyltransferase H (322 aa).

S-adenosyl-L-methionine contacts are provided by residues 35-37 (GGY), Asp-52, Phe-79, Asp-100, and Gln-107. The tract at residues 254–322 (GATPAGSRHL…TAPKKEGRQG (69 aa)) is disordered. A compositionally biased stretch (low complexity) spans 295–309 (SRSATLRVARRTAAA).

This sequence belongs to the methyltransferase superfamily. RsmH family.

It is found in the cytoplasm. The catalysed reaction is cytidine(1402) in 16S rRNA + S-adenosyl-L-methionine = N(4)-methylcytidine(1402) in 16S rRNA + S-adenosyl-L-homocysteine + H(+). Specifically methylates the N4 position of cytidine in position 1402 (C1402) of 16S rRNA. In Rhizorhabdus wittichii (strain DSM 6014 / CCUG 31198 / JCM 15750 / NBRC 105917 / EY 4224 / RW1) (Sphingomonas wittichii), this protein is Ribosomal RNA small subunit methyltransferase H.